Here is a 70-residue protein sequence, read N- to C-terminus: UPF0337 protein BT9727_3385 (70 aa).

The protein belongs to the UPF0337 (CsbD) family.

This is UPF0337 protein BT9727_3385 from Bacillus thuringiensis subsp. konkukian (strain 97-27).